A 482-amino-acid polypeptide reads, in one-letter code: ATP synthase subunit beta (482 aa).

168–175 contacts ATP; that stretch reads GGAGVGKT.

The protein belongs to the ATPase alpha/beta chains family. As to quaternary structure, F-type ATPases have 2 components, CF(1) - the catalytic core - and CF(0) - the membrane proton channel. CF(1) has five subunits: alpha(3), beta(3), gamma(1), delta(1), epsilon(1). CF(0) has three main subunits: a(1), b(2) and c(9-12). The alpha and beta chains form an alternating ring which encloses part of the gamma chain. CF(1) is attached to CF(0) by a central stalk formed by the gamma and epsilon chains, while a peripheral stalk is formed by the delta and b chains.

The protein localises to the cell membrane. It catalyses the reaction ATP + H2O + 4 H(+)(in) = ADP + phosphate + 5 H(+)(out). Its function is as follows. Produces ATP from ADP in the presence of a proton gradient across the membrane. The catalytic sites are hosted primarily by the beta subunits. The chain is ATP synthase subunit beta from Nocardia farcinica (strain IFM 10152).